The chain runs to 307 residues: Putative S-adenosyl-L-methionine-dependent methyltransferase MMAR_4570 (307 aa).

S-adenosyl-L-methionine contacts are provided by residues aspartate 128 and 157 to 158 (DL).

Belongs to the UPF0677 family.

In terms of biological role, exhibits S-adenosyl-L-methionine-dependent methyltransferase activity. This chain is Putative S-adenosyl-L-methionine-dependent methyltransferase MMAR_4570, found in Mycobacterium marinum (strain ATCC BAA-535 / M).